Reading from the N-terminus, the 287-residue chain is AA9 family lytic polysaccharide monooxygenase C (287 aa).

The signal sequence occupies residues 1–16; sequence MKSVLVALATATAVSA. His17 serves as a coordination point for Cu(2+). N-linked (GlcNAc...) asparagine glycosylation is present at Asn22. 2 disulfide bridges follow: Cys77–Cys230 and Cys200–Cys284. His114 contributes to the Cu(2+) binding site. O2 contacts are provided by His216 and Gln225. Tyr227 contributes to the Cu(2+) binding site.

This sequence belongs to the polysaccharide monooxygenase AA9 family. Cu(2+) serves as cofactor.

It is found in the secreted. It carries out the reaction [(1-&gt;4)-beta-D-glucosyl]n+m + reduced acceptor + O2 = 4-dehydro-beta-D-glucosyl-[(1-&gt;4)-beta-D-glucosyl]n-1 + [(1-&gt;4)-beta-D-glucosyl]m + acceptor + H2O.. In terms of biological role, lytic polysaccharide monooxygenase (LPMO) that depolymerizes crystalline and amorphous polysaccharides via the oxidation of scissile alpha- or beta-(1-4)-glycosidic bonds, yielding C1 or C4 oxidation products. Catalysis by LPMOs requires the reduction of the active-site copper from Cu(II) to Cu(I) by a reducing agent and H(2)O(2) or O(2) as a cosubstrate. This Podospora anserina (strain S / ATCC MYA-4624 / DSM 980 / FGSC 10383) (Pleurage anserina) protein is AA9 family lytic polysaccharide monooxygenase C.